Reading from the N-terminus, the 695-residue chain is Potassium voltage-gated channel subfamily KQT member 4 (695 aa).

The tract at residues 1-21 is disordered; the sequence is MAEAPPRRLGLGPPPGDAPRA. Topologically, residues 1-96 are cytoplasmic; sequence MAEAPPRRLG…VYNVLERPRG (96 aa). A 1,2-diacyl-sn-glycero-3-phospho-(1D-myo-inositol-4,5-bisphosphate) is bound at residue arginine 93. The helical transmembrane segment at 97–118 threads the bilayer; sequence WAFVYHVFIFLLVFSCLVLSVL. The Extracellular portion of the chain corresponds to 119 to 129; the sequence is STIQEHQELAN. A helical transmembrane segment spans residues 130–152; the sequence is ECLLILEFVMIVVFGLEYIVRVW. The Cytoplasmic segment spans residues 153–168; it reads SAGCCCRYRGWQGRFR. A helical membrane pass occupies residues 169 to 191; the sequence is FARKPFCVIDFIVFVASVAVIAA. An a 1,2-diacyl-sn-glycero-3-phospho-(1D-myo-inositol-4,5-bisphosphate)-binding site is contributed by lysine 172. Topologically, residues 192–202 are extracellular; the sequence is GTQGNIFATSA. A helical; Voltage-sensor membrane pass occupies residues 203-223; sequence LRSMRFLQILRMVRMDRRGGT. The a 1,2-diacyl-sn-glycero-3-phospho-(1D-myo-inositol-4,5-bisphosphate) site is built by arginine 219, arginine 220, lysine 225, and serine 235. Over 224 to 235 the chain is Cytoplasmic; it reads WKLLGSVVYAHS. Residues 236–258 traverse the membrane as a helical segment; sequence KELITAWYIGFLVLIFASFLVYL. Over 259–270 the chain is Extracellular; sequence AEKDANSDFSSY. Residues 271 to 292 constitute an intramembrane region (pore-forming); it reads ADSLWWGTITLTTIGYGDKTPH. Residue threonine 293 is a topological domain, extracellular. Residues 294–322 traverse the membrane as a helical segment; sequence WLGRVLAAGFALLGISFFALPAGILGSGF. Residues 323–695 are Cytoplasmic-facing; sequence ALKVQEQHRQ…ISRSVSTNMD (373 aa). Residues histidine 330 and lysine 333 each contribute to the a 1,2-diacyl-sn-glycero-3-phospho-(1D-myo-inositol-4,5-bisphosphate) site. Residues 342 to 351 form an interaction with CALM region; sequence AANLIQAAWR. 2 disordered regions span residues 400–480 and 496–515; these read RRAP…TKVQ and RLKP…AEEK. 2 stretches are compositionally biased toward polar residues: residues 443 to 452 and 463 to 480; these read GSSQRRTGPS and TSPS…TKVQ. An interaction with CALM region spans residues 535–549; the sequence is RSIRILKFLVAKRKF. The interval 546-650 is C-terminal assembly domain (tetramerization); sequence KRKFKETLRP…SRCLRSGTSA (105 aa). The tract at residues 587-606 is disordered; sequence VGRGPGDRKAREKGDKGPSD. Over residues 591–605 the composition is skewed to basic and acidic residues; it reads PGDRKAREKGDKGPS. The stretch at 615–636 forms a coiled coil; it reads MMGRVVKVEKQVQSIEHKLDLL.

This sequence belongs to the potassium channel family. KQT (TC 1.A.1.15) subfamily. Kv7.4/KCNQ4 sub-subfamily. In terms of assembly, homotetramer. Interacts (via C-terminus) with calmodulin; forms a heterooctameric structure (with 4:4 KCNQ1:CALM stoichiometry); the interaction is calcium-independent, constitutive, participates in the proper assembly of a functional channel. The interaction with calcium-free CALM controls channel trafficking whereas interaction with calcium-bound CALM regulates channel gating. May form a functional heteromultimeric channel with KCNQ3. Interacts with HSP90AB1; promotes cell surface expression of KCNQ4. As to expression, expressed in the outer, but not the inner, sensory hair cells of the cochlea. Slightly expressed in heart, brain and skeletal muscle.

The protein localises to the basal cell membrane. It catalyses the reaction K(+)(in) = K(+)(out). Two molecules of phosphatidylinositol-4,5-bisphosphate (PIP2-I and PIP2-II) are essential to activate KCNQ4 channel by inducing the coupling of the voltage-sensing domain (VSD) and the pore-forming domain (PD). Upon channel activation, PIP2-I and PIP2-II disrupt the VSD-calmodulin/CALM interaction, causing the release of CALM from the VSD which triggers the opening of the gate. Calcium suppresses KCNQ4 channel current through calcium-bound CALM C-terminus. Therefore CALM acts as calcium sensor that controls channel activity. ML213 potentiates KCNQ4 channel. KCNQ4 channel is blocked by linopirdin, XE991 and bepridil, whereas clofilium is without significant effect. Muscarinic agonist oxotremorine-M strongly suppress KCNQ4 current in CHO cells in which cloned KCNQ4 channels were coexpressed with M1 muscarinic receptors. Its function is as follows. Pore-forming subunit of the voltage-gated potassium (Kv) channel involved in the regulation of sensory cells excitability in the cochlea. KCNQ4/Kv7.4 channel is composed of 4 pore-forming subunits assembled as tetramers. Promotes the outflow of potassium ions in the repolarization phase of action potential which plays a role in regulating membrane potential of excitable cells. The channel conducts a slowly activating and deactivating current. Current often shows some inward rectification at positive potentials. Channel may be selectively permeable in vitro to other cations besides potassium, in decreasing order of affinity K(+) = Rb(+) &gt; Cs(+) &gt; Na(+). Important for normal physiological function of inner ear such as sensory perception of sound. This Homo sapiens (Human) protein is Potassium voltage-gated channel subfamily KQT member 4.